Here is a 430-residue protein sequence, read N- to C-terminus: Enolase (430 aa).

Residue Q167 participates in (2R)-2-phosphoglycerate binding. E209 acts as the Proton donor in catalysis. Mg(2+)-binding residues include D246, E287, and D314. (2R)-2-phosphoglycerate contacts are provided by K339, R368, S369, and K390. Residue K339 is the Proton acceptor of the active site.

This sequence belongs to the enolase family. The cofactor is Mg(2+).

The protein localises to the cytoplasm. Its subcellular location is the secreted. The protein resides in the cell surface. The catalysed reaction is (2R)-2-phosphoglycerate = phosphoenolpyruvate + H2O. Its pathway is carbohydrate degradation; glycolysis; pyruvate from D-glyceraldehyde 3-phosphate: step 4/5. Catalyzes the reversible conversion of 2-phosphoglycerate (2-PG) into phosphoenolpyruvate (PEP). It is essential for the degradation of carbohydrates via glycolysis. The sequence is that of Enolase from Prochlorococcus marinus (strain AS9601).